The following is a 127-amino-acid chain: Nuclear transport factor 2 (127 aa).

Residue K4 is modified to N6-acetyllysine. In terms of domain architecture, NTF2 spans 10–121; it reads IGSSFIQHYY…WVCTNDMFRL (112 aa).

As to quaternary structure, homodimer. Interacts with RAN (GDP-bound form); the interaction is direct and regulates RAN nuclear import. Interacts with the nucleoporins NUP54, NUP58 and NUP62 (via FG repeats); recruits NUTF2 to the nuclear pore complex a step required for NUTF2-mediated GDP-bound RAN nuclear import. Interacts with CAPG; mediates its nuclear import.

The protein resides in the cytoplasm. The protein localises to the cytosol. Its subcellular location is the nucleus outer membrane. It localises to the nucleus. It is found in the nuclear pore complex. The protein resides in the nucleus inner membrane. The protein localises to the nucleoplasm. In terms of biological role, mediates the import of GDP-bound RAN from the cytoplasm into the nucleus which is essential for the function of RAN in cargo receptor-mediated nucleocytoplasmic transport. Thereby, plays indirectly a more general role in cargo receptor-mediated nucleocytoplasmic transport. Interacts with GDP-bound RAN in the cytosol, recruits it to the nuclear pore complex via its interaction with nucleoporins and promotes its nuclear import. This is Nuclear transport factor 2 from Bos taurus (Bovine).